The following is a 140-amino-acid chain: MLSPKKTKYRKFHRGRLKGHATKGSALAFGRYGIQALTSSWITSRQIESVRRVIVRHLKRGGKLWIRIFPDKAVTAKPLETRMGSGKGSPEHWIAVVKSGHILFEIDGVSLELAKEAVKLAIYKLPIKCKFLSNDEFAKD.

The protein belongs to the universal ribosomal protein uL16 family. In terms of assembly, part of the 50S ribosomal subunit.

It is found in the plastid. Its subcellular location is the chloroplast. This chain is Large ribosomal subunit protein uL16c, found in Cyanidium caldarium (Red alga).